The sequence spans 96 residues: Large ribosomal subunit protein bL28 (96 aa).

This sequence belongs to the bacterial ribosomal protein bL28 family.

The protein is Large ribosomal subunit protein bL28 of Orientia tsutsugamushi (strain Boryong) (Rickettsia tsutsugamushi).